A 488-amino-acid chain; its full sequence is Malonate-semialdehyde dehydrogenase (488 aa).

The NAD(+) site is built by A150, F152, K176, E179, R180, S229, and T251. Residue C284 is the Nucleophile of the active site. E382 lines the NAD(+) pocket.

It belongs to the aldehyde dehydrogenase family. IolA subfamily. Homotetramer.

It catalyses the reaction 3-oxopropanoate + NAD(+) + CoA + H2O = hydrogencarbonate + acetyl-CoA + NADH + H(+). It carries out the reaction 2-methyl-3-oxopropanoate + NAD(+) + CoA + H2O = propanoyl-CoA + hydrogencarbonate + NADH + H(+). The protein operates within polyol metabolism; myo-inositol degradation into acetyl-CoA; acetyl-CoA from myo-inositol: step 7/7. In terms of biological role, catalyzes the oxidation of malonate semialdehyde (MSA) and methylmalonate semialdehyde (MMSA) into acetyl-CoA and propanoyl-CoA, respectively. Is involved in a myo-inositol catabolic pathway. Bicarbonate, and not CO2, is the end-product of the enzymatic reaction. The chain is Malonate-semialdehyde dehydrogenase from Listeria monocytogenes serotype 4b (strain F2365).